A 363-amino-acid polypeptide reads, in one-letter code: Anthranilate phosphoribosyltransferase (363 aa).

Residues G85, 88 to 89 (GD), T93, 95 to 98 (NVST), 113 to 121 (KHGNRALSS), and A125 contribute to the 5-phospho-alpha-D-ribose 1-diphosphate site. G85 provides a ligand contact to anthranilate. S97 contributes to the Mg(2+) binding site. Residue N116 coordinates anthranilate. R171 lines the anthranilate pocket. Residues D233 and E234 each coordinate Mg(2+).

The protein belongs to the anthranilate phosphoribosyltransferase family. Homodimer. Mg(2+) serves as cofactor.

It carries out the reaction N-(5-phospho-beta-D-ribosyl)anthranilate + diphosphate = 5-phospho-alpha-D-ribose 1-diphosphate + anthranilate. Its pathway is amino-acid biosynthesis; L-tryptophan biosynthesis; L-tryptophan from chorismate: step 2/5. In terms of biological role, catalyzes the transfer of the phosphoribosyl group of 5-phosphorylribose-1-pyrophosphate (PRPP) to anthranilate to yield N-(5'-phosphoribosyl)-anthranilate (PRA). This chain is Anthranilate phosphoribosyltransferase, found in Gluconobacter oxydans (strain 621H) (Gluconobacter suboxydans).